Reading from the N-terminus, the 140-residue chain is Calcium-binding protein B (140 aa).

EF-hand domains lie at 38–73 and 74–109; these read ATLSKYKTQFMSYDINNSGDIDHYELQLLMEKINQP and KTYLELKKMIEQVDSTGKGAINFRDFIKMMTGKTSS. 5 residues coordinate Ca(2+): D51, N53, S55, D57, and E62.

The protein is Calcium-binding protein B (cbpB) of Dictyostelium discoideum (Social amoeba).